A 464-amino-acid chain; its full sequence is UDP-N-acetylmuramate--L-alanine ligase (464 aa).

Gly-123–Thr-129 is a binding site for ATP.

The protein belongs to the MurCDEF family.

The protein resides in the cytoplasm. The enzyme catalyses UDP-N-acetyl-alpha-D-muramate + L-alanine + ATP = UDP-N-acetyl-alpha-D-muramoyl-L-alanine + ADP + phosphate + H(+). It participates in cell wall biogenesis; peptidoglycan biosynthesis. Cell wall formation. The sequence is that of UDP-N-acetylmuramate--L-alanine ligase from Carboxydothermus hydrogenoformans (strain ATCC BAA-161 / DSM 6008 / Z-2901).